The chain runs to 452 residues: Pup--protein ligase (452 aa).

Glutamate 9 provides a ligand contact to Mg(2+). Residue arginine 53 coordinates ATP. Tyrosine 55 serves as a coordination point for Mg(2+). The active-site Proton acceptor is aspartate 57. Glutamate 63 contacts Mg(2+). ATP is bound by residues threonine 66 and tryptophan 419.

The protein belongs to the Pup ligase/Pup deamidase family. Pup-conjugating enzyme subfamily.

The enzyme catalyses ATP + [prokaryotic ubiquitin-like protein]-L-glutamate + [protein]-L-lysine = ADP + phosphate + N(6)-([prokaryotic ubiquitin-like protein]-gamma-L-glutamyl)-[protein]-L-lysine.. The protein operates within protein degradation; proteasomal Pup-dependent pathway. Its pathway is protein modification; protein pupylation. Its function is as follows. Catalyzes the covalent attachment of the prokaryotic ubiquitin-like protein modifier Pup to the proteasomal substrate proteins, thereby targeting them for proteasomal degradation. This tagging system is termed pupylation. The ligation reaction involves the side-chain carboxylate of the C-terminal glutamate of Pup and the side-chain amino group of a substrate lysine. The polypeptide is Pup--protein ligase (Salinispora tropica (strain ATCC BAA-916 / DSM 44818 / JCM 13857 / NBRC 105044 / CNB-440)).